A 558-amino-acid chain; its full sequence is Dihydroxy-acid dehydratase (558 aa).

Position 78 (Asp-78) interacts with Mg(2+). Cys-119 is a binding site for [2Fe-2S] cluster. Mg(2+) contacts are provided by Asp-120 and Lys-121. N6-carboxylysine is present on Lys-121. Cys-192 contributes to the [2Fe-2S] cluster binding site. Mg(2+) is bound at residue Glu-446. Ser-472 (proton acceptor) is an active-site residue.

It belongs to the IlvD/Edd family. As to quaternary structure, homodimer. The cofactor is [2Fe-2S] cluster. It depends on Mg(2+) as a cofactor.

The catalysed reaction is (2R)-2,3-dihydroxy-3-methylbutanoate = 3-methyl-2-oxobutanoate + H2O. It carries out the reaction (2R,3R)-2,3-dihydroxy-3-methylpentanoate = (S)-3-methyl-2-oxopentanoate + H2O. Its pathway is amino-acid biosynthesis; L-isoleucine biosynthesis; L-isoleucine from 2-oxobutanoate: step 3/4. It functions in the pathway amino-acid biosynthesis; L-valine biosynthesis; L-valine from pyruvate: step 3/4. Functionally, functions in the biosynthesis of branched-chain amino acids. Catalyzes the dehydration of (2R,3R)-2,3-dihydroxy-3-methylpentanoate (2,3-dihydroxy-3-methylvalerate) into 2-oxo-3-methylpentanoate (2-oxo-3-methylvalerate) and of (2R)-2,3-dihydroxy-3-methylbutanoate (2,3-dihydroxyisovalerate) into 2-oxo-3-methylbutanoate (2-oxoisovalerate), the penultimate precursor to L-isoleucine and L-valine, respectively. This is Dihydroxy-acid dehydratase from Campylobacter jejuni subsp. jejuni serotype O:23/36 (strain 81-176).